The following is a 159-amino-acid chain: uncharacterized protein (159 aa).

The N-terminal stretch at 1–20 is a signal peptide; sequence MKKIIAMSLLMFSVVMSVNA.

This is an uncharacterized protein from Pasteurella multocida (strain Pm70).